Reading from the N-terminus, the 122-residue chain is uncharacterized protein (122 aa).

The signal sequence occupies residues 1-17 (MKYSSIFSMLSFFILFA).

This is an uncharacterized protein from Escherichia coli (strain K12).